The following is a 143-amino-acid chain: Ribosome-binding factor A (143 aa).

Basic and acidic residues predominate over residues 119-129 (AVGDKPAVPRD). The interval 119–143 (AVGDKPAVPRDDNDDPVSDNPERDA) is disordered.

The protein belongs to the RbfA family. As to quaternary structure, monomer. Binds 30S ribosomal subunits, but not 50S ribosomal subunits or 70S ribosomes.

It localises to the cytoplasm. Its function is as follows. One of several proteins that assist in the late maturation steps of the functional core of the 30S ribosomal subunit. Associates with free 30S ribosomal subunits (but not with 30S subunits that are part of 70S ribosomes or polysomes). Required for efficient processing of 16S rRNA. May interact with the 5'-terminal helix region of 16S rRNA. The polypeptide is Ribosome-binding factor A (Marinobacter nauticus (strain ATCC 700491 / DSM 11845 / VT8) (Marinobacter aquaeolei)).